Consider the following 231-residue polypeptide: Cytochrome c oxidase assembly factor 7 (231 aa).

Position 2 is an N-acetylalanine (Ala2). 5 Sel1-like repeats span residues 34-66 (PDGCYRLVDYLEGIRKNFDEAAKVLKFNCEENQ), 68-104 (SDSCYKLGAYYVTGKGGLTQDLKAAARCFLMACEKPG), 108-146 (IAACHNVGLLAHDGQVNEDGQPDLGKARDYYTRACDGGY), 147-183 (TSSCFNLSAMFLQGAPGFPKDMDLACKYSMKACDLGH), and 184-219 (IWACANASRMYKLGDGVDKDEAKAEVLKNRAQQLHK).

The protein belongs to the hcp beta-lactamase family. Interacts with CHCHD4/MIA40 through transient intermolecular disulfide bonds.

The protein localises to the mitochondrion intermembrane space. Required for assembly of mitochondrial respiratory chain complex I and complex IV. The sequence is that of Cytochrome c oxidase assembly factor 7 (COA7) from Homo sapiens (Human).